The following is a 190-amino-acid chain: MKLLLSLAFVLALSQVKADKPVWADEAANGEHQDAWKHLQKLVEENYDLIKATYKNDPVWGNDFTCVGTAAQNLNEDEKNVEAWFMFMNNADTVYQHTFEKATPDKMYGYNKENAITYQTEDGQVLTDVLAFSDDNCYVIYALGPDGSGAGYELWATDYTDVPASCLEKFNEYAAGLPVRDVYTSDCLPE.

Residues 1–18 form the signal peptide; the sequence is MKLLLSLAFVLALSQVKA. 7 residues coordinate histamine: tyrosine 54, aspartate 57, tryptophan 60, glutamate 100, tyrosine 118, glutamate 153, and tryptophan 155. Intrachain disulfides connect cysteine 66-cysteine 187 and cysteine 137-cysteine 166.

Belongs to the calycin superfamily. Histamine-binding salivary protein family. Monomer. Expressed in salivary glands.

The protein localises to the secreted. Salivary tick protein that acts by scavenging histamine at the wound site, outcompeting histamine receptors for histamine, thereby overcoming host inflammatory responses. Binds histamine with a high-affinity (Kd=18 nM). Contains two binding histamine sites (H and L), that appear to bind histamine with differing affinities (high and low). In vivo, when tested on a mouse asthma model, shows a profound inhibitory effect on allergic asthma. Aerosol administration of this protein prevents airway hyperreactivity and abrogates peribronchial inflammation, eosinophil recruitment, mucus hypersecretion, and interleukins (IL-4 and IL-5) secretion. In addition, when tested on a mouse model of acute respiratory distress syndrome (ARDS), it attenuates endotoxin-induced acute lung injury. The sequence is that of Female-specific histamine-binding protein 1 from Rhipicephalus appendiculatus (Brown ear tick).